A 446-amino-acid polypeptide reads, in one-letter code: MQKKIYIKTFGCQMNEYDSDKMVDVLNASEGLIKTDTPEDADVILLNTCSVREKAQEKVFSDLGRLRELKFNNPDLVIGVGGCVASQEGDAIVKRAPYVDLVFGPQTLHRLPEMLKQRRSTGRSQVDISFPEIEKFDHMPPAKVEGATAFVSIMEGCSKYCSYCVVPYTRGEEVSRRFEDVLAEVAGLEAQGVKEITLLGQNVNAYRGEMADGEIADFALLIEYIAELEGIERIRFVTSHPKEFTQRLIDAYAKVPKLVNHLYLPAQHGSDRILAAMKRGYTSLEYKSILRRLREVRPNISISSDFIVGFPGETDADFEAMMKLINDIGYDNSFSFIFSPRPGTPAANLEDDTPHEVKLQRLQRLQAVIDQNTRRYSDEMVGTVQRILVEGPSKKDPDELQGRTENNRVVNFAAGEHGARLIGQMVDVNIVQSFAYTLRGEIIVKQ.

In terms of domain architecture, MTTase N-terminal spans 3–120 (KKIYIKTFGC…LPEMLKQRRS (118 aa)). 6 residues coordinate [4Fe-4S] cluster: Cys-12, Cys-49, Cys-83, Cys-157, Cys-161, and Cys-164. Positions 143 to 375 (KVEGATAFVS…QAVIDQNTRR (233 aa)) constitute a Radical SAM core domain. In terms of domain architecture, TRAM spans 378 to 444 (DEMVGTVQRI…AYTLRGEIIV (67 aa)).

The protein belongs to the methylthiotransferase family. MiaB subfamily. Monomer. Requires [4Fe-4S] cluster as cofactor.

It is found in the cytoplasm. It carries out the reaction N(6)-dimethylallyladenosine(37) in tRNA + (sulfur carrier)-SH + AH2 + 2 S-adenosyl-L-methionine = 2-methylsulfanyl-N(6)-dimethylallyladenosine(37) in tRNA + (sulfur carrier)-H + 5'-deoxyadenosine + L-methionine + A + S-adenosyl-L-homocysteine + 2 H(+). Functionally, catalyzes the methylthiolation of N6-(dimethylallyl)adenosine (i(6)A), leading to the formation of 2-methylthio-N6-(dimethylallyl)adenosine (ms(2)i(6)A) at position 37 in tRNAs that read codons beginning with uridine. The sequence is that of tRNA-2-methylthio-N(6)-dimethylallyladenosine synthase from Janthinobacterium sp. (strain Marseille) (Minibacterium massiliensis).